We begin with the raw amino-acid sequence, 352 residues long: N-acetyl-gamma-glutamyl-phosphate reductase (352 aa).

Residue Cys-158 is part of the active site.

Belongs to the NAGSA dehydrogenase family. Type 1 subfamily.

The protein resides in the cytoplasm. The enzyme catalyses N-acetyl-L-glutamate 5-semialdehyde + phosphate + NADP(+) = N-acetyl-L-glutamyl 5-phosphate + NADPH + H(+). Its pathway is amino-acid biosynthesis; L-arginine biosynthesis; N(2)-acetyl-L-ornithine from L-glutamate: step 3/4. In terms of biological role, catalyzes the NADPH-dependent reduction of N-acetyl-5-glutamyl phosphate to yield N-acetyl-L-glutamate 5-semialdehyde. The protein is N-acetyl-gamma-glutamyl-phosphate reductase of Mycobacterium bovis (strain BCG / Tokyo 172 / ATCC 35737 / TMC 1019).